Reading from the N-terminus, the 748-residue chain is NAD(P)H-quinone oxidoreductase subunit 5, chloroplastic (748 aa).

The next 16 membrane-spanning stretches (helical) occupy residues 9–29 (WIIP…LLLF), 40–60 (WSFP…YLSI), 89–109 (IDPL…MVLI), 125–145 (FAYM…SNLI), 147–167 (IYIF…FWFT), 185–205 (GDFG…SFEF), 219–239 (NEVN…GAVA), 258–278 (TPIS…FLVA), 280–300 (LLPL…IGII), 327–347 (LGYM…FHLI), 354–374 (ALLF…VGYS), 396–416 (NAFL…CFWS), 425–445 (WLYS…TAFY), 550–570 (LFPM…GSPF), 611–631 (ATFS…FYKP), and 728–748 (YILL…FVFF).

It belongs to the complex I subunit 5 family. As to quaternary structure, NDH is composed of at least 16 different subunits, 5 of which are encoded in the nucleus.

The protein localises to the plastid. Its subcellular location is the chloroplast thylakoid membrane. The catalysed reaction is a plastoquinone + NADH + (n+1) H(+)(in) = a plastoquinol + NAD(+) + n H(+)(out). The enzyme catalyses a plastoquinone + NADPH + (n+1) H(+)(in) = a plastoquinol + NADP(+) + n H(+)(out). Functionally, NDH shuttles electrons from NAD(P)H:plastoquinone, via FMN and iron-sulfur (Fe-S) centers, to quinones in the photosynthetic chain and possibly in a chloroplast respiratory chain. The immediate electron acceptor for the enzyme in this species is believed to be plastoquinone. Couples the redox reaction to proton translocation, and thus conserves the redox energy in a proton gradient. This chain is NAD(P)H-quinone oxidoreductase subunit 5, chloroplastic (ndhF), found in Cucumis sativus (Cucumber).